Consider the following 211-residue polypeptide: ATP phosphoribosyltransferase (211 aa).

Belongs to the ATP phosphoribosyltransferase family. Short subfamily. In terms of assembly, heteromultimer composed of HisG and HisZ subunits.

The protein resides in the cytoplasm. It catalyses the reaction 1-(5-phospho-beta-D-ribosyl)-ATP + diphosphate = 5-phospho-alpha-D-ribose 1-diphosphate + ATP. The protein operates within amino-acid biosynthesis; L-histidine biosynthesis; L-histidine from 5-phospho-alpha-D-ribose 1-diphosphate: step 1/9. Its function is as follows. Catalyzes the condensation of ATP and 5-phosphoribose 1-diphosphate to form N'-(5'-phosphoribosyl)-ATP (PR-ATP). Has a crucial role in the pathway because the rate of histidine biosynthesis seems to be controlled primarily by regulation of HisG enzymatic activity. The chain is ATP phosphoribosyltransferase from Rippkaea orientalis (strain PCC 8801 / RF-1) (Cyanothece sp. (strain PCC 8801)).